Reading from the N-terminus, the 227-residue chain is PKHD-type hydroxylase BamMC406_5004 (227 aa).

Residues 80 to 179 (QVYPPLFNRY…RVASFFWVQS (100 aa)) form the Fe2OG dioxygenase domain. Fe cation is bound by residues H98, D100, and H160. R170 contributes to the 2-oxoglutarate binding site.

Requires Fe(2+) as cofactor. The cofactor is L-ascorbate.

This is PKHD-type hydroxylase BamMC406_5004 from Burkholderia ambifaria (strain MC40-6).